The chain runs to 548 residues: T-complex protein 1 subunit theta (548 aa).

Alanine 2 carries the post-translational modification N-acetylalanine. ADP-binding residues include tyrosine 47 and glycine 48. Aspartate 99 serves as a coordination point for Mg(2+). The ADP site is built by glycine 100, threonine 101, asparagine 102, phenylalanine 103, methionine 169, serine 170, lysine 171, glycine 412, and aspartate 499. Glycine 100, threonine 101, and asparagine 102 together coordinate ATP. Residues serine 170, lysine 171, glycine 412, aspartate 499, and lysine 504 each coordinate ATP. Tyrosine 505 bears the Phosphotyrosine mark. Positions 529–548 (PAGGPKPPSGKKDWDEDQND) are disordered.

As to quaternary structure, component of the chaperonin-containing T-complex (TRiC), a hexadecamer composed of two identical back-to-back stacked rings enclosing a protein folding chamber. Each ring is made up of eight different subunits: TCP1/CCT1, CCT2, CCT3, CCT4, CCT5, CCT6A/CCT6, CCT7, CCT8.

The protein localises to the cytoplasm. Its subcellular location is the cytoskeleton. It localises to the microtubule organizing center. The protein resides in the centrosome. It is found in the cilium basal body. The catalysed reaction is ATP + H2O = ADP + phosphate + H(+). Component of the chaperonin-containing T-complex (TRiC), a molecular chaperone complex that assists the folding of actin, tubulin and other proteins upon ATP hydrolysis. In Gallus gallus (Chicken), this protein is T-complex protein 1 subunit theta.